The following is a 353-amino-acid chain: Carbamoyl phosphate synthase small chain (353 aa).

Residues Met1–Thr166 form a CPSase region. Positions 45, 214, and 216 each coordinate L-glutamine. One can recognise a Glutamine amidotransferase type-1 domain in the interval Thr166–Pro349. The Nucleophile role is filled by Cys241. Residues Leu242, Gln245, Asn283, Gly285, and Tyr286 each contribute to the L-glutamine site. Active-site residues include His322 and Glu324.

This sequence belongs to the CarA family. As to quaternary structure, composed of two chains; the small (or glutamine) chain promotes the hydrolysis of glutamine to ammonia, which is used by the large (or ammonia) chain to synthesize carbamoyl phosphate. Tetramer of heterodimers (alpha,beta)4.

It carries out the reaction hydrogencarbonate + L-glutamine + 2 ATP + H2O = carbamoyl phosphate + L-glutamate + 2 ADP + phosphate + 2 H(+). It catalyses the reaction L-glutamine + H2O = L-glutamate + NH4(+). Its pathway is amino-acid biosynthesis; L-arginine biosynthesis; carbamoyl phosphate from bicarbonate: step 1/1. It functions in the pathway pyrimidine metabolism; UMP biosynthesis via de novo pathway; (S)-dihydroorotate from bicarbonate: step 1/3. In terms of biological role, small subunit of the glutamine-dependent carbamoyl phosphate synthetase (CPSase). CPSase catalyzes the formation of carbamoyl phosphate from the ammonia moiety of glutamine, carbonate, and phosphate donated by ATP, constituting the first step of 2 biosynthetic pathways, one leading to arginine and/or urea and the other to pyrimidine nucleotides. The small subunit (glutamine amidotransferase) binds and cleaves glutamine to supply the large subunit with the substrate ammonia. This Halobacterium salinarum (strain ATCC 29341 / DSM 671 / R1) protein is Carbamoyl phosphate synthase small chain.